Here is a 206-residue protein sequence, read N- to C-terminus: Small ribosomal subunit protein uS4 (206 aa).

Residues 18 to 46 (NIWGRPKSPVNRREYGPGQHGQRRKQKMS) are disordered. In terms of domain architecture, S4 RNA-binding spans 94–154 (RRLDAVVYRA…EKSRQMAALL (61 aa)).

It belongs to the universal ribosomal protein uS4 family. Part of the 30S ribosomal subunit. Contacts protein S5. The interaction surface between S4 and S5 is involved in control of translational fidelity.

Its function is as follows. One of the primary rRNA binding proteins, it binds directly to 16S rRNA where it nucleates assembly of the body of the 30S subunit. With S5 and S12 plays an important role in translational accuracy. The sequence is that of Small ribosomal subunit protein uS4 from Dinoroseobacter shibae (strain DSM 16493 / NCIMB 14021 / DFL 12).